Here is an 834-residue protein sequence, read N- to C-terminus: Protein kintoun (834 aa).

4 disordered regions span residues 214–239 (TAEE…KQEP), 374–415 (SRED…SVAP), 547–669 (KGKV…STGR), and 759–834 (KKNQ…EMDD). S378 is subject to Phosphoserine. The segment covering 389-398 (PVEEDPDGEL) has biased composition (acidic residues). A compositionally biased stretch (basic and acidic residues) spans 552–571 (AKKDNAPLDVKFERNQEGHA). A compositionally biased stretch (acidic residues) spans 582-596 (EEEEDKENQDQEPES). The span at 597-607 (DQQQQQQVQNK) shows a compositional bias: low complexity. Basic residues-rich tracts occupy residues 608-619 (KPGKKQRKKNKK) and 759-773 (KKNQ…RAQQ). S777 carries the post-translational modification Phosphoserine. Positions 785–798 (EETRGSALKQEENP) are enriched in basic and acidic residues.

This sequence belongs to the PIH1 family. Kintoun subfamily. As to quaternary structure, interacts with Pp1alpha-96A, Pp1-87B, Pp1-13C and flw.

The protein resides in the cytoplasm. Required for cytoplasmic pre-assembly of axonemal dyneins, thereby playing a central role in motility in cilia and flagella. Involved in pre-assembly of dynein arm complexes in the cytoplasm before intraflagellar transport loads them for the ciliary compartment. The protein is Protein kintoun of Drosophila melanogaster (Fruit fly).